A 136-amino-acid chain; its full sequence is Magnetite biomineralization protein Mms6 (136 aa).

Topologically, residues 1-85 (MGEMEREGAT…AVGGTIWSGK (85 aa)) are cytoplasmic. Positions 86 to 95 (GLALGLGMGL) are GL repeat. The chain crosses the membrane as a helical span at residues 86–106 (GLALGLGMGLGAWGPLILGVV). Topologically, residues 107–136 (GAGAVYAYMKSRDIEAAQSDEEVELRDALS) are lumenal. The MIC, self-assembles, binds magnetite, Fe(2+) and Fe(3+) stretch occupies residues 115–136 (MKSRDIEAAQSDEEVELRDALS).

Belongs to the magnetosome Mms6 family. Full length protein oligomerizes and interacts with MamA. In terms of processing, may undergo cleavage.

Its subcellular location is the magnetosome membrane. Functionally, promotes the formation of magnetite in Fe(2+)-rich conditions, when magnetite is not readily formed. Binds both Fe(2+) and Fe(3+). May help control the production of crystals with a specific morphology. May function with MamX, MamY amd MamZ in biomineralization. The 4 genes of this operon collectively influence magnetosome size and number. The polypeptide is Magnetite biomineralization protein Mms6 (Magnetospirillum gryphiswaldense (strain DSM 6361 / JCM 21280 / NBRC 15271 / MSR-1)).